Consider the following 119-residue polypeptide: Nascent polypeptide-associated complex protein (119 aa).

Residues 5–73 (RMNSREMRRL…FRETPKKQEG (69 aa)) enclose the NAC-A/B domain.

The protein belongs to the NAC-alpha family. As to quaternary structure, homodimer. Interacts with the ribosome. Binds ribosomal RNA.

In terms of biological role, contacts the emerging nascent chain on the ribosome. This Thermoplasma volcanium (strain ATCC 51530 / DSM 4299 / JCM 9571 / NBRC 15438 / GSS1) protein is Nascent polypeptide-associated complex protein.